The primary structure comprises 602 residues: Elongation factor 4 (602 aa).

Residues 2 to 184 enclose the tr-type G domain; sequence KHIRNFSIIA…AIVAKVPAPR (183 aa). Residues 14–19 and 131–134 each bind GTP; these read DHGKST and NKMD.

The protein belongs to the TRAFAC class translation factor GTPase superfamily. Classic translation factor GTPase family. LepA subfamily.

The protein localises to the cell inner membrane. The enzyme catalyses GTP + H2O = GDP + phosphate + H(+). Its function is as follows. Required for accurate and efficient protein synthesis under certain stress conditions. May act as a fidelity factor of the translation reaction, by catalyzing a one-codon backward translocation of tRNAs on improperly translocated ribosomes. Back-translocation proceeds from a post-translocation (POST) complex to a pre-translocation (PRE) complex, thus giving elongation factor G a second chance to translocate the tRNAs correctly. Binds to ribosomes in a GTP-dependent manner. The sequence is that of Elongation factor 4 from Verminephrobacter eiseniae (strain EF01-2).